Reading from the N-terminus, the 114-residue chain is Large ribosomal subunit protein uL18 (114 aa).

Belongs to the universal ribosomal protein uL18 family. Part of the 50S ribosomal subunit; part of the 5S rRNA/L5/L18/L25 subcomplex. Contacts the 5S and 23S rRNAs.

Its function is as follows. This is one of the proteins that bind and probably mediate the attachment of the 5S RNA into the large ribosomal subunit, where it forms part of the central protuberance. The polypeptide is Large ribosomal subunit protein uL18 (Bacteroides fragilis (strain ATCC 25285 / DSM 2151 / CCUG 4856 / JCM 11019 / LMG 10263 / NCTC 9343 / Onslow / VPI 2553 / EN-2)).